A 581-amino-acid polypeptide reads, in one-letter code: Proline--tRNA ligase (581 aa).

The protein belongs to the class-II aminoacyl-tRNA synthetase family. ProS type 1 subfamily. Homodimer.

It localises to the cytoplasm. The enzyme catalyses tRNA(Pro) + L-proline + ATP = L-prolyl-tRNA(Pro) + AMP + diphosphate. In terms of biological role, catalyzes the attachment of proline to tRNA(Pro) in a two-step reaction: proline is first activated by ATP to form Pro-AMP and then transferred to the acceptor end of tRNA(Pro). As ProRS can inadvertently accommodate and process non-cognate amino acids such as alanine and cysteine, to avoid such errors it has two additional distinct editing activities against alanine. One activity is designated as 'pretransfer' editing and involves the tRNA(Pro)-independent hydrolysis of activated Ala-AMP. The other activity is designated 'posttransfer' editing and involves deacylation of mischarged Ala-tRNA(Pro). The misacylated Cys-tRNA(Pro) is not edited by ProRS. This Rhodococcus erythropolis (strain PR4 / NBRC 100887) protein is Proline--tRNA ligase.